Consider the following 192-residue polypeptide: 3-hydroxyanthranilate 3,4-dioxygenase 1 (192 aa).

Residue Arg50 coordinates O2. Positions 54, 60, and 102 each coordinate Fe cation. Residue Glu60 coordinates substrate. The substrate site is built by Arg106 and Glu116. A divalent metal cation-binding residues include Cys131, Cys134, Cys168, and Cys171.

This sequence belongs to the 3-HAO family. It depends on Fe(2+) as a cofactor.

The protein resides in the cytoplasm. It carries out the reaction 3-hydroxyanthranilate + O2 = (2Z,4Z)-2-amino-3-carboxymuconate 6-semialdehyde. The protein operates within cofactor biosynthesis; NAD(+) biosynthesis; quinolinate from L-kynurenine: step 3/3. Its function is as follows. Catalyzes the oxidative ring opening of 3-hydroxyanthranilate to 2-amino-3-carboxymuconate semialdehyde, which spontaneously cyclizes to quinolinate. The sequence is that of 3-hydroxyanthranilate 3,4-dioxygenase 1 (bna1-1) from Aspergillus fumigatus (strain CBS 144.89 / FGSC A1163 / CEA10) (Neosartorya fumigata).